A 501-amino-acid polypeptide reads, in one-letter code: Acid-sensing ion channel 1A (501 aa).

The Cytoplasmic segment spans residues 1-54 (MKTSVMDLKVEPMDIDFDQPPPLQVFAHTSTLHGISHIFSYEKITAKCCLWVVF). The chain crosses the membrane as a helical span at residues 55–71 (FLSSLTFLMYVCIDRIQ). At 72–429 (FYLEYPHVTK…ETIEQRKAYE (358 aa)) the chain is on the extracellular side. 7 disulfide bridges follow: Cys-98/Cys-199, Cys-177/Cys-184, Cys-294/Cys-369, Cys-312/Cys-365, Cys-316/Cys-363, Cys-325/Cys-347, and Cys-327/Cys-339. Asn-164 carries an N-linked (GlcNAc...) asparagine glycan. An N-linked (GlcNAc...) asparagine glycan is attached at Asn-370. Residues 430 to 460 (VAGLLGDIGGQMGLFIGASILTILELFDYLY) traverse the membrane as a discontinuously helical segment. The short motif at 446-448 (GAS) is the GAS motif; ion selectivity filter element. At 461 to 501 (EVMKYRLCRCSNKKHHNNNNNTDHNAVFSLDDVNCHVSKFH) the chain is on the cytoplasmic side.

Belongs to the amiloride-sensitive sodium channel (TC 1.A.6) family. ASIC1 subfamily. Homotrimer. Heterotrimer; with other ASIC proteins producing channel with different properties. Interacts with asic1c. As to expression, expressed in central nervous system. Faintly expressed in the trunk, presumably in dorsal root ganglia.

The protein localises to the cell membrane. The protein resides in the postsynaptic cell membrane. It is found in the cell projection. It localises to the dendrite. The enzyme catalyses Na(+)(in) = Na(+)(out). It catalyses the reaction K(+)(in) = K(+)(out). It carries out the reaction Li(+)(in) = Li(+)(out). The catalysed reaction is Ca(2+)(in) = Ca(2+)(out). Its activity is regulated as follows. Inhibited by the diuretic drug amiloride. Forms voltage-independent, pH-gated trimeric sodium channels that act as postsynaptic excitatory receptors in the nervous system, playing a crucial role in regulating synaptic plasticity, learning, and memory. Upon extracellular pH drop this channel elicits transient, fast activating, and completely desensitizing inward currents. Displays high selectivity for sodium ions but can also permit the permeation of other cations. The chain is Acid-sensing ion channel 1A (asic1a) from Danio rerio (Zebrafish).